Consider the following 226-residue polypeptide: Urease accessory protein UreF (226 aa).

This sequence belongs to the UreF family. In terms of assembly, ureD, UreF and UreG form a complex that acts as a GTP-hydrolysis-dependent molecular chaperone, activating the urease apoprotein by helping to assemble the nickel containing metallocenter of UreC. The UreE protein probably delivers the nickel.

Its subcellular location is the cytoplasm. In terms of biological role, required for maturation of urease via the functional incorporation of the urease nickel metallocenter. The chain is Urease accessory protein UreF from Nitrosospira multiformis (strain ATCC 25196 / NCIMB 11849 / C 71).